The sequence spans 981 residues: uncharacterized protein (981 aa).

In terms of domain architecture, Carrier spans 535 to 612; it reads VLLNPVAIEI…SIASIIQKKS (78 aa). At Ser571 the chain carries O-(pantetheine 4'-phosphoryl)serine.

Belongs to the ATP-dependent AMP-binding enzyme family.

This is an uncharacterized protein from Schizosaccharomyces pombe (strain 972 / ATCC 24843) (Fission yeast).